A 379-amino-acid polypeptide reads, in one-letter code: Protein RecA (379 aa).

The tract at residues M1–G23 is disordered. A compositionally biased stretch (polar residues) spans S7–L16. Residue G84 to T91 participates in ATP binding.

Belongs to the RecA family.

It is found in the cytoplasm. Its function is as follows. Can catalyze the hydrolysis of ATP in the presence of single-stranded DNA, the ATP-dependent uptake of single-stranded DNA by duplex DNA, and the ATP-dependent hybridization of homologous single-stranded DNAs. It interacts with LexA causing its activation and leading to its autocatalytic cleavage. This Prochlorococcus marinus (strain MIT 9313) protein is Protein RecA.